Consider the following 1052-residue polypeptide: Eukaryotic translation initiation factor 3 subunit A (1052 aa).

In terms of domain architecture, PCI spans 325–505 (IQYAASAVLL…GSLHFNNNIF (181 aa)). Coiled coils occupy residues 568–712 (REHV…RLRE) and 769–882 (EKTA…SAQT). Basic and acidic residues-rich tracts occupy residues 570-600 (HVSNLSRRDEIEKQKEELEQSRRRRHQEQMQ) and 793-874 (KIRL…EQEK). Disordered regions lie at residues 570–606 (HVSNLSRRDEIEKQKEELEQSRRRRHQEQMQKHHQNQ) and 793–1052 (KIRL…DDKN). Polar residues-rich tracts occupy residues 875–887 (LSNLSAQTSQPTW) and 895–906 (APTTAAPSSMRV). 4 stretches are compositionally biased toward basic and acidic residues: residues 942–952 (DRGDRAPRDTG), 960–970 (DRGDRAPRDTG), 979–1013 (RAPRDFSGRSEPSRSGPRDFSGRSEAGRTSGERRA), and 1037–1052 (GSERRVNIPSRGDDKN).

This sequence belongs to the eIF-3 subunit A family. In terms of assembly, component of the eukaryotic translation initiation factor 3 (eIF-3) complex.

Its subcellular location is the cytoplasm. In terms of biological role, RNA-binding component of the eukaryotic translation initiation factor 3 (eIF-3) complex, which is involved in protein synthesis of a specialized repertoire of mRNAs and, together with other initiation factors, stimulates binding of mRNA and methionyl-tRNAi to the 40S ribosome. The eIF-3 complex specifically targets and initiates translation of a subset of mRNAs involved in cell proliferation. This is Eukaryotic translation initiation factor 3 subunit A from Monosiga brevicollis (Choanoflagellate).